A 166-amino-acid chain; its full sequence is Cyanate hydratase (166 aa).

Catalysis depends on residues R106, E109, and S132.

This sequence belongs to the cyanase family.

The enzyme catalyses cyanate + hydrogencarbonate + 3 H(+) = NH4(+) + 2 CO2. Functionally, catalyzes the reaction of cyanate with bicarbonate to produce ammonia and carbon dioxide. The chain is Cyanate hydratase from Verticillium alfalfae (strain VaMs.102 / ATCC MYA-4576 / FGSC 10136) (Verticillium wilt of alfalfa).